The sequence spans 414 residues: Esterase FrsA (414 aa).

The protein belongs to the FrsA family.

It carries out the reaction a carboxylic ester + H2O = an alcohol + a carboxylate + H(+). Functionally, catalyzes the hydrolysis of esters. The sequence is that of Esterase FrsA from Shigella sonnei (strain Ss046).